The sequence spans 2358 residues: Cell wall alpha-1,3-glucan synthase mok13 (2358 aa).

Residues 1645–1659 are compositionally biased toward basic and acidic residues; sequence EGLENEENELKDKAP. Residues 1645–1669 form a disordered region; that stretch reads EGLENEENELKDKAPPNEPNVGSLF.

Belongs to the glycosyltransferase group 1 family.

It carries out the reaction [(1-&gt;3)-alpha-D-glucosyl](n) + UDP-alpha-D-glucose = [(1-&gt;3)-alpha-D-glucosyl](n+1) + UDP + H(+). This is Cell wall alpha-1,3-glucan synthase mok13 (mok13) from Schizosaccharomyces pombe (strain 972 / ATCC 24843) (Fission yeast).